The primary structure comprises 125 residues: Protein 5 (125 aa).

The polypeptide is Protein 5 (5) (Hordeum vulgare (Barley)).